The primary structure comprises 194 residues: Interleukin-17C (194 aa).

Residues 1–16 (MSLLLLGWLPTGMTHQ) form the signal peptide. Cystine bridges form between C125/C185 and C130/C187.

It belongs to the IL-17 family. Binds to a heterodimer formed by IL17RA and IL17RE. As to expression, expressed by epithelial cells after bacterial challenge. Low expression, if any, in lymphocytes.

It is found in the secreted. Functionally, cytokine that plays a crucial role in innate immunity of the epithelium, including to intestinal bacterial pathogens, in an autocrine manner. Stimulates the production of antibacterial peptides and pro-inflammatory molecules for host defense by signaling through the NFKB and MAPK pathways. Acts synergically with IL22, TNF and IL1B in inducing antibacterial peptides. May have protective function by maintaining epithelial homeostasis after an inflammatory challenge, such as that caused in the intestine by dextran sulfate sodium in a colitis model. May also promote an inflammatory phenotype, such as skin in a psoriasis model. Enhanced IL17C/IL17RE signaling may also lead to greater susceptibility to autoimmune diseases, such as autoimmune encephalitis. This Mus musculus (Mouse) protein is Interleukin-17C (Il17c).